Reading from the N-terminus, the 251-residue chain is Auxin-responsive protein IAA29 (251 aa).

Positions 3-7 (LDLGL) match the EAR-like (transcriptional repression) motif. A PB1 domain is found at 159-246 (SMYVKVKMDG…SIIRDRPCAY (88 aa)).

This sequence belongs to the Aux/IAA family. Homodimers and heterodimers.

Its subcellular location is the nucleus. Functionally, aux/IAA proteins are short-lived transcriptional factors that function as repressors of early auxin response genes at low auxin concentrations. Repression is thought to result from the interaction with auxin response factors (ARFs), proteins that bind to the auxin-responsive promoter element (AuxRE). Formation of heterodimers with ARF proteins may alter their ability to modulate early auxin response genes expression. This is Auxin-responsive protein IAA29 (IAA29) from Arabidopsis thaliana (Mouse-ear cress).